The chain runs to 884 residues: Cadherin-1 (884 aa).

The signal sequence occupies residues 1-23 (MGARCRSFSALLLLLQVSSWLCQ). Positions 24-156 (ELEPESCSPG…VYPGLRRQKR (133 aa)) are excised as a propeptide. Residues 119-139 (KSMGHHHHRHHHRDPASESNP) form a disordered region. Basic residues predominate over residues 121-131 (MGHHHHRHHHR). 5 consecutive Cadherin domains span residues 157–264 (DWVI…RPEF), 265–377 (TQEV…APVF), 378–488 (NPST…APIF), 489–595 (MPAE…DNAP), and 596–699 (IPEP…NCMK). Residues 157 to 709 (DWVIPPISCP…AGIVAAGLQV (553 aa)) lie on the Extracellular side of the membrane. Asp259 is a Ca(2+) binding site. Ser282 and Ser287 each carry an O-linked (Man...) serine glycan. A Ca(2+)-binding site is contributed by Asp290. Residues Thr360, Thr472, Thr474, and Thr511 are each glycosylated (O-linked (Man...) threonine). Residue Asn560 is glycosylated (N-linked (GlcNAc...) asparagine). O-linked (Man...) threonine glycosylation is found at Thr578, Thr580, and Thr582. Residue Asn639 is glycosylated (N-linked (GlcNAc...) asparagine). Residues 710–733 (PAILGILGGILALLILILLLLLFL) traverse the membrane as a helical segment. The Cytoplasmic segment spans residues 734 to 884 (RRRTVVKEPL…ADMYGGGEDD (151 aa)). Positions 749 to 808 (DTRDNVYYYDEEGGGEEDQDFDLSQLHRGLDARPEVTRNDVAPTLMSVPQYRPRPANPDE) are disordered. 3 positions are modified to phosphotyrosine; by SRC: Tyr755, Tyr756, and Tyr757. A compositionally biased stretch (acidic residues) spans 757–769 (YDEEGGGEEDQDF). Positions 760 to 771 (EGGGEEDQDFDL) are required for binding CTNND1 and PSEN1. A Phosphoserine modification is found at Ser772. The segment covering 776–786 (RGLDARPEVTR) has biased composition (basic and acidic residues). 4 positions are modified to phosphoserine: Ser795, Ser840, Ser842, and Ser848. Positions 813 to 884 (IDENLKAADS…ADMYGGGEDD (72 aa)) are required for binding alpha, beta and gamma catenins.

Homodimer; disulfide-linked. Component of an E-cadherin/ catenin adhesion complex composed of at least E-cadherin/CDH1, beta-catenin/CTNNB1 or gamma-catenin/JUP, and potentially alpha-catenin/CTNNA1; the complex is located to adherens junctions. Found in a complex composed of CDH1, RAP1A and PKP3; PKP3 acts as a scaffold protein within the complex, the complex is required for CDH1 localization to mature desmosome cell junctions. Interacts with the TRPV4 and CTNNB1 complex. Interacts with CTNND1. The stable association of CTNNA1 is controversial as CTNNA1 was shown not to bind to F-actin when assembled in the complex. Alternatively, the CTNNA1-containing complex may be linked to F-actin by other proteins such as LIMA1. Interaction with PSEN1, cleaves CDH1 resulting in the disassociation of cadherin-based adherens junctions (CAJs). Interacts with AJAP1 and DLGAP5. Interacts with TBC1D2. Interacts with LIMA1. Interacts with CAV1. Interacts with PIP5K1C. Interacts with RAB8B. Interacts with DDR1; this stabilizes CDH1 at the cell surface and inhibits its internalization. Interacts with RAPGEF2. Interacts with KLRG1. Forms a ternary complex composed of ADAM10, CADH1 and EPHA4; within the complex, CADH1 is cleaved by ADAM10 which disrupts adherens junctions. Interacts with SPEF1. Interacts with CTNNB1 and PKP2. Interacts with AMOTL2; the interaction may facilitate binding of radial actin fibers to cell junction complexes. Interacts with DSG3; the interaction is required for CDH1 localization to developing adherens junctions. Post-translationally, during apoptosis or with calcium influx, cleaved by a membrane-bound metalloproteinase (ADAM10), PS1/gamma-secretase and caspase-3. Processing by the metalloproteinase, induced by calcium influx, causes disruption of cell-cell adhesion and the subsequent release of beta-catenin into the cytoplasm. The residual membrane-tethered cleavage product is rapidly degraded via an intracellular proteolytic pathway. Cleavage by caspase-3 releases the cytoplasmic tail resulting in disintegration of the actin microfilament system. The gamma-secretase-mediated cleavage promotes disassembly of adherens junctions. During development of the cochlear organ of Corti, cleavage by ADAM10 at adherens junctions promotes pillar cell separation. In terms of processing, O-glycosylated. O-manosylated by TMTC1, TMTC2, TMTC3 or TMTC4. Ser-287 and Thr-511 are O-manosylated by TMTC2 or TMTC4 but not TMTC1 or TMTC3. N-glycosylation at Asn-639 is essential for expression, folding and trafficking. Addition of bisecting N-acetylglucosamine by MGAT3 modulates its cell membrane location. Post-translationally, ubiquitinated by a SCF complex containing SKP2, which requires prior phosphorylation by CK1/CSNK1A1. Ubiquitinated by CBLL1/HAKAI, requires prior phosphorylation at Tyr-756. In terms of tissue distribution, expressed in inner and outer pillar cells of the organ of Corti (at protein level). Expressed in granuloma macrophages (at protein level). Expressed in the epidermal keratinocytes of the skin from birth (at protein level). Expressed in non-neural epithelial tissues.

It is found in the cell junction. The protein resides in the adherens junction. The protein localises to the cell membrane. Its subcellular location is the endosome. It localises to the golgi apparatus. It is found in the trans-Golgi network. The protein resides in the cytoplasm. The protein localises to the desmosome. In terms of biological role, cadherins are calcium-dependent cell adhesion proteins. They preferentially interact with themselves in a homophilic manner in connecting cells; cadherins may thus contribute to the sorting of heterogeneous cell types. CDH1 is involved in mechanisms regulating cell-cell adhesions, mobility and proliferation of epithelial cells. Promotes organization of radial actin fiber structure and cellular response to contractile forces, via its interaction with AMOTL2 which facilitates anchoring of radial actin fibers to CDH1 junction complexes at the cell membrane. Plays a role in the early stages of desmosome cell-cell junction formation via facilitating the recruitment of DSG2 and DSP to desmosome plaques. Has a potent invasive suppressor role. It is a ligand for integrin alpha-E/beta-7. Functionally, E-Cad/CTF2 promotes non-amyloidogenic degradation of Abeta precursors. Has a strong inhibitory effect on APP C99 and C83 production. (Microbial infection) Does not function as a receptor for L.monocytogenes internalin A (InlA); mutating a single surface-exposed residue confers receptor activity to this protein and promotes uptake of the bacteria. The sequence is that of Cadherin-1 (Cdh1) from Mus musculus (Mouse).